A 363-amino-acid chain; its full sequence is Osmoprotective compounds uptake ATP-binding protein GgtA (363 aa).

The region spanning Val-4–Ile-234 is the ABC transporter domain. Residue Gly-36 to Thr-43 participates in ATP binding.

This sequence belongs to the ABC transporter superfamily. In terms of assembly, the complex is composed of two ATP-binding proteins (GgtA), two transmembrane proteins (GgtC and GgtD) and a solute-binding protein (GgtB).

The protein localises to the cell membrane. Part of the ABC transporter complex GgtABCD involved in the uptake of the osmoprotective compounds glucosylglycerol (GG), sucrose and trehalose. Responsible for energy coupling to the transport system. The sequence is that of Osmoprotective compounds uptake ATP-binding protein GgtA from Synechocystis sp. (strain ATCC 27184 / PCC 6803 / Kazusa).